We begin with the raw amino-acid sequence, 121 residues long: Large ribosomal subunit protein bL19 (121 aa).

The protein belongs to the bacterial ribosomal protein bL19 family.

This protein is located at the 30S-50S ribosomal subunit interface and may play a role in the structure and function of the aminoacyl-tRNA binding site. In Chlamydia muridarum (strain MoPn / Nigg), this protein is Large ribosomal subunit protein bL19 (rplS).